A 341-amino-acid chain; its full sequence is S-adenosylmethionine:tRNA ribosyltransferase-isomerase (341 aa).

The protein belongs to the QueA family. In terms of assembly, monomer.

It is found in the cytoplasm. The catalysed reaction is 7-aminomethyl-7-carbaguanosine(34) in tRNA + S-adenosyl-L-methionine = epoxyqueuosine(34) in tRNA + adenine + L-methionine + 2 H(+). Its pathway is tRNA modification; tRNA-queuosine biosynthesis. Its function is as follows. Transfers and isomerizes the ribose moiety from AdoMet to the 7-aminomethyl group of 7-deazaguanine (preQ1-tRNA) to give epoxyqueuosine (oQ-tRNA). The polypeptide is S-adenosylmethionine:tRNA ribosyltransferase-isomerase (Alkaliphilus metalliredigens (strain QYMF)).